Reading from the N-terminus, the 37-residue chain is QIETNKKCQGGSCASVCRKVIGVAAGKCINGRCVCYP.

Q1 is modified (pyrrolidone carboxylic acid). 3 cysteine pairs are disulfide-bonded: C8–C28, C13–C33, and C17–C35.

As to expression, expressed by the venom gland.

Its subcellular location is the secreted. In terms of biological role, inhibits A-type (Kv4) voltage-gated potassium channels of striated neurons (Ki=131 nM), probably by acting as a pore blocker. Has also been shown to block ERG1/Kv11.1/KCNH2 potassium channels (IC(50)=7.9 uM). The presence of the Kv4-associated proteins DPP6 or DPP10 is mandatory to have high-affinity blockade of Kv4.2/KCND2 and Kv4.3/KCND3 channels (80-90% inhibition at 500 nM of toxin). In contrast, the presence of the Kv4-associated protein KChIP1/KCNIP1 does not enhance the affinity blockade (only 40% inhibition at 500 nM). In adult rat brain, the toxin binds to sites in the striatum, and cerebellum. It shares the same target in rat brain than AaTX1 (AC Q867F4) and BmTX3 (AC Q8I0L5). In DPP6 knockout mice, A-type currents are about 20-fold less affected by the toxin. In rodent models of Parkinson's disease, the toxin reduces motor symptoms and emotional and cognitive symptoms. This chain is Potassium channel toxin alpha-KTx 15.3, found in Androctonus mauritanicus mauritanicus (Scorpion).